Consider the following 21-residue polypeptide: Histone H2B 1 (21 aa).

Residues Met-1–Ala-21 form a disordered region. N6-acetyllysine occurs at positions 6 and 11. Positions Ala-8–Ala-21 are enriched in basic residues. Ser-13 is modified (phosphoserine). Lys-14 and Lys-19 each carry N6-acetyllysine. Lys-19 participates in a covalent cross-link: Glycyl lysine isopeptide (Lys-Gly) (interchain with G-Cter in ubiquitin).

Belongs to the histone H2B family. The nucleosome is a histone octamer containing two molecules each of H2A, H2B, H3 and H4 assembled in one H3-H4 heterotetramer and two H2A-H2B heterodimers. The octamer wraps approximately 147 bp of DNA. In terms of processing, monoubiquitination at the C-terminal Lys gives a specific tag for epigenetic transcriptional activation and is also prerequisite for histone H3 'Lys-4' and 'Lys-79' methylation. Post-translationally, phosphorylated during apoptosis; which facilitates apoptotic chromatin condensation.

It is found in the nucleus. The protein resides in the chromosome. Core component of nucleosome. Nucleosomes wrap and compact DNA into chromatin, limiting DNA accessibility to the cellular machineries which require DNA as a template. Histones thereby play a central role in transcription regulation, DNA repair, DNA replication and chromosomal stability. DNA accessibility is regulated via a complex set of post-translational modifications of histones, also called histone code, and nucleosome remodeling. Functionally, has broad-spectrum antimicrobial and antibacterial activity. It is important in the antimicrobial defenses of fish skin and possesses strong activity against saprolegnia, the most common fungal infection in fish. It is also inhibitory to fish bacterial pathogens, such as aeromonas hydrophila, vibrio alginolyticus and E.coli D31. The polypeptide is Histone H2B 1 (Ictalurus punctatus (Channel catfish)).